A 476-amino-acid polypeptide reads, in one-letter code: DnaJ protein P58IPK homolog A (476 aa).

A signal peptide spans 1 to 28 (MVAMARWPWRVLLPLLLLHSSPVFFVFA). TPR repeat units follow at residues 36-69 (PSTLFKRALEMMNLRKYDGSLGLLNAVLEVEPNH), 70-103 (SEAYRQRASVLRHKCRYKEAEGDYSKYLELKPGS), 116-150 (AQNALESAYGQFESHDFSKVLDYINKIVLVFSPDC), 152-184 (KAKLLKAKALLALKDYSTVISETGFILKEDEDN), 185-218 (LDALLLRGRAYYYLADHDVASRHYQKGLRLDPEH), 231-264 (LVKKTKSAEDNAAKGKLRVSAEDYKASLAMDPDH), 269-302 (VHLYLGLCKVLVKLGRGKEAISSCTEALNIDGEL), and 304-336 (DALTQRGEAKLLTEDWEGAVQDLKEAAQKSPQD). The J domain occupies 357 to 423 (DWYKILGISK…DKRVRYDRGE (67 aa)).

As to quaternary structure, interacts with BIP1.

It is found in the endoplasmic reticulum lumen. Its function is as follows. May play a role in protein folding in the endoplasmic reticulum. The polypeptide is DnaJ protein P58IPK homolog A (Oryza sativa subsp. japonica (Rice)).